A 179-amino-acid chain; its full sequence is Large ribosomal subunit protein uL5 (179 aa).

The protein belongs to the universal ribosomal protein uL5 family. In terms of assembly, part of the 50S ribosomal subunit; part of the 5S rRNA/L5/L18/L25 subcomplex. Contacts the 5S rRNA and the P site tRNA. Forms a bridge to the 30S subunit in the 70S ribosome.

In terms of biological role, this is one of the proteins that bind and probably mediate the attachment of the 5S RNA into the large ribosomal subunit, where it forms part of the central protuberance. In the 70S ribosome it contacts protein S13 of the 30S subunit (bridge B1b), connecting the 2 subunits; this bridge is implicated in subunit movement. Contacts the P site tRNA; the 5S rRNA and some of its associated proteins might help stabilize positioning of ribosome-bound tRNAs. This Saccharophagus degradans (strain 2-40 / ATCC 43961 / DSM 17024) protein is Large ribosomal subunit protein uL5.